The sequence spans 509 residues: ATP synthase subunit alpha (509 aa).

Position 169 to 176 (169 to 176 (GDRQTGKT)) interacts with ATP.

This sequence belongs to the ATPase alpha/beta chains family. F-type ATPases have 2 components, CF(1) - the catalytic core - and CF(0) - the membrane proton channel. CF(1) has five subunits: alpha(3), beta(3), gamma(1), delta(1), epsilon(1). CF(0) has three main subunits: a(1), b(2) and c(9-12). The alpha and beta chains form an alternating ring which encloses part of the gamma chain. CF(1) is attached to CF(0) by a central stalk formed by the gamma and epsilon chains, while a peripheral stalk is formed by the delta and b chains.

Its subcellular location is the cell inner membrane. It carries out the reaction ATP + H2O + 4 H(+)(in) = ADP + phosphate + 5 H(+)(out). Its function is as follows. Produces ATP from ADP in the presence of a proton gradient across the membrane. The alpha chain is a regulatory subunit. This chain is ATP synthase subunit alpha, found in Parvibaculum lavamentivorans (strain DS-1 / DSM 13023 / NCIMB 13966).